The primary structure comprises 91 residues: Small ribosomal subunit protein bS16c (91 aa).

It belongs to the bacterial ribosomal protein bS16 family.

The protein localises to the plastid. It localises to the chloroplast. In Pelargonium hortorum (Common geranium), this protein is Small ribosomal subunit protein bS16c.